A 258-amino-acid chain; its full sequence is Zinc import ATP-binding protein ZnuC (258 aa).

The region spanning 7-233 is the ABC transporter domain; sequence ITAKNINHAY…PAFQELFGQG (227 aa). Residue 39–46 coordinates ATP; it reads GPNGAGKS.

The protein belongs to the ABC transporter superfamily. Zinc importer (TC 3.A.1.15.5) family. In terms of assembly, the complex is composed of two ATP-binding proteins (ZnuC), two transmembrane proteins (ZnuB) and a solute-binding protein (ZnuA).

It localises to the cell inner membrane. It catalyses the reaction Zn(2+)(out) + ATP(in) + H2O(in) = Zn(2+)(in) + ADP(in) + phosphate(in) + H(+)(in). Functionally, part of the ABC transporter complex ZnuABC involved in zinc import. Responsible for energy coupling to the transport system. This chain is Zinc import ATP-binding protein ZnuC, found in Hydrogenovibrio crunogenus (strain DSM 25203 / XCL-2) (Thiomicrospira crunogena).